A 309-amino-acid polypeptide reads, in one-letter code: Acetylglutamate kinase (309 aa).

Substrate contacts are provided by residues 82–83 (GG), arginine 104, and asparagine 206.

It belongs to the acetylglutamate kinase family. ArgB subfamily.

It is found in the cytoplasm. It catalyses the reaction N-acetyl-L-glutamate + ATP = N-acetyl-L-glutamyl 5-phosphate + ADP. The protein operates within amino-acid biosynthesis; L-arginine biosynthesis; N(2)-acetyl-L-ornithine from L-glutamate: step 2/4. Functionally, catalyzes the ATP-dependent phosphorylation of N-acetyl-L-glutamate. The protein is Acetylglutamate kinase of Cupriavidus pinatubonensis (strain JMP 134 / LMG 1197) (Cupriavidus necator (strain JMP 134)).